Here is a 443-residue protein sequence, read N- to C-terminus: MSGAADGTVPVGEDTHQEDSGERECEQRPVHSGREATGESDPALERPDHGERHGPEPRFPSFSVRPEAAQPPPSRTIARESFLGRFITDCLKWKNDVVKIDPNICKDPFPSDDEIFGNIGSHSTLLRELHECAYRYQKAVNASHPLLQRDGSLKTLNYGVQPFIVTVYGPTGSGKSQFLRNVISSKMIDPPPETVFFVTPEKGTVTNEEKLSWEAQCAEGVYNSKCVPITKTFQPAFVNLSFSEAVDEENLSIDSPNNVFVQAAKKGPICIIIDECMNQLGACRSISSFFHALPSKIFGRFPACTGYTVLVVLHNMNPRSDRGNIKDLKIQSKCHIISPQLESQQVSRFIKNFSFGFPTPLVSVIKDIVDHAKMHSKFSWLVYCSVPVRESFRWSYYSPEDQLTPLYVDLQAVMYEACHNIRRVFCKRLYSRVSYANKRKWYD.

The interval 1-75 is disordered; that stretch reads MSGAADGTVP…PEAAQPPPSR (75 aa). Over residues 13–56 the composition is skewed to basic and acidic residues; sequence EDTHQEDSGERECEQRPVHSGREATGESDPALERPDHGERHGPE. 169–176 is an ATP binding site; the sequence is GPTGSGKS. The segment at 433–443 is DNA-binding; it reads VSYANKRKWYD.

This sequence belongs to the adenoviridae packaging protein 1 family. Homodimer. Part of a genome packaging complex composed of packaging proteins 1, 2 and 3; this complex specifically binds to the packaging sequence on the left end of viral genomic DNA and performs packaging of the viral genome. Interacts with protein 33K.

It localises to the virion. Its subcellular location is the host nucleus. It is found in the host nucleoplasm. The protein localises to the host nucleolus. Component of the packaging machinery which encapsidates the viral DNA into preformed capsids and transcriptional activator of the viral major late promoter (MLP). Binds, along with packaging proteins 2 and 3, to the specific packaging sequence on the left end of viral genomic DNA and displays ATPase activity thereby providing the power stroke of the packaging machinery. The activity of packaging protein IVa2 is stimulated by protein 33K which acts as a terminase. May be the protein that pumps DNA into the capsid powered by ATP hydrolysis. Specifically binds to the 5'-CG-3' nucleotides of the repeats making up the packaging sequence. Component of the DEF-A and DEF-B transcription factors that bind downstream elements of the major late promoter (MLP), and stimulate transcription from the MLP after initiation of viral DNA replication. DEF-A is a heterodimer packaging proteins 1 and 2 and DEF-B is a homodimer of packaging protein 1. The chain is Packaging protein 1 from Pantherophis guttatus (Corn snake).